Here is a 289-residue protein sequence, read N- to C-terminus: Protein FraH (289 aa).

The segment at 4 to 49 (CPNCNHPNPDGAVQCEACYTPLPATSNCPNCGATVQSDAAFCGQCG) adopts a DZANK-type zinc-finger fold. The segment at 18–48 (CEACYTPLPATSNCPNCGATVQSDAAFCGQC) is a zinc-finger region. In terms of domain architecture, FHA spans 204-260 (VHIGKPNDRIPPDVDVSGFANSEIVSRVHADIRLEGDAHYIEDVGSSNGTYINNLPL).

Its function is as follows. Putative heterocyst to vegetative cell connection. The polypeptide is Protein FraH (fraH) (Nostoc sp. (strain PCC 7120 / SAG 25.82 / UTEX 2576)).